We begin with the raw amino-acid sequence, 310 residues long: Cytochrome f (310 aa).

An N-terminal signal peptide occupies residues 1 to 27 (MRRILTFFLGSIIIGLSIIISPSSSFA). Heme is bound by residues Tyr-28, Cys-48, Cys-51, and His-52. Residues 277–297 (VIGLIAFFAGVALTQILLVLK) form a helical membrane-spanning segment.

It belongs to the cytochrome f family. As to quaternary structure, the 4 large subunits of the cytochrome b6-f complex are cytochrome b6, subunit IV (17 kDa polypeptide, PetD), cytochrome f and the Rieske protein, while the 4 small subunits are PetG, PetL, PetM and PetN. The complex functions as a dimer. It depends on heme as a cofactor.

The protein localises to the cellular thylakoid membrane. Component of the cytochrome b6-f complex, which mediates electron transfer between photosystem II (PSII) and photosystem I (PSI), cyclic electron flow around PSI, and state transitions. This Prochlorococcus marinus (strain SARG / CCMP1375 / SS120) protein is Cytochrome f.